The following is a 122-amino-acid chain: uncharacterized protein (122 aa).

2 helical membrane passes run 14–34 (WLWILTAILAISFFVICFNNV) and 83–103 (IIGVAFGLGFVGTMLIDYFII).

Its subcellular location is the cell membrane. This is an uncharacterized protein from Ureaplasma parvum serovar 3 (strain ATCC 700970).